Here is a 409-residue protein sequence, read N- to C-terminus: Glycogenin (409 aa).

Residues Leu-8, Tyr-14, and Arg-80 each coordinate UDP. 11 residues coordinate UDP-alpha-D-glucose: Leu-8, Tyr-14, Arg-80, Lys-89, Asp-105, Asp-107, Asn-140, Ser-141, Asp-169, Asp-172, and Gln-173. Asp-105 and Asp-107 together coordinate UDP. Mn(2+) is bound by residues Asp-105 and Asp-107. The O-linked (Glc...) tyrosine glycan is linked to Tyr-212. UDP contacts are provided by His-229, Gly-232, and Lys-235. His-229 provides a ligand contact to Mn(2+). UDP-alpha-D-glucose is bound by residues Gly-232 and Lys-235. The segment at 283-303 (RIEEDSHETEEKVDEEVSISE) is disordered.

Belongs to the glycosyltransferase 8 family. Glycogenin subfamily. Requires Mn(2+) as cofactor.

The protein resides in the cytoplasm. It is found in the vacuole. The enzyme catalyses L-tyrosyl-[glycogenin] + UDP-alpha-D-glucose = alpha-D-glucosyl-L-tyrosyl-[glycogenin] + UDP + H(+). It catalyses the reaction [1,4-alpha-D-glucosyl](n)-L-tyrosyl-[glycogenin] + UDP-alpha-D-glucose = [1,4-alpha-D-glucosyl](n+1)-L-tyrosyl-[glycogenin] + UDP + H(+). In terms of biological role, glycogenin participates in the glycogen biosynthetic process along with glycogen synthase and glycogen branching enzyme. It catalyzes the formation of a short alpha (1,4)-glucosyl chain covalently attached via a glucose 1-O-tyrosyl linkage to internal tyrosine residues and these chains act as primers for the elongation reaction catalyzed by glycogen synthase. This chain is Glycogenin, found in Komagataella phaffii (strain GS115 / ATCC 20864) (Yeast).